The primary structure comprises 407 residues: Arylacetamide deacetylase-like 4 (407 aa).

Topologically, residues 1 to 4 (MAVP) are cytoplasmic. The chain crosses the membrane as a helical; Signal-anchor for type II membrane protein span at residues 5 to 25 (WLVLLLALPIFFLGVFVWAVF). The Lumenal segment spans residues 26–407 (EHFLTTDIPA…NAVVSYIKGI (382 aa)). An Involved in the stabilization of the negatively charged intermediate by the formation of the oxyanion hole motif is present at residues 119 to 121 (HGG). An N-linked (GlcNAc...) asparagine glycan is attached at asparagine 168. Residue serine 193 is part of the active site. Asparagine 269 carries N-linked (GlcNAc...) asparagine glycosylation. Active-site residues include aspartate 347 and histidine 377.

This sequence belongs to the 'GDXG' lipolytic enzyme family.

It localises to the membrane. This is Arylacetamide deacetylase-like 4 (AADACL4) from Homo sapiens (Human).